Reading from the N-terminus, the 292-residue chain is Tetrahydromethanopterin:alpha-L-glutamate ligase (292 aa).

In terms of domain architecture, ATP-grasp spans 103–286 (SFLMEVHKIP…IAQNLIDEAL (184 aa)). Residues K138, 176 to 188 (QEFV…VYRD), and R204 each bind ATP. Mg(2+)-binding residues include D247, E259, and N261. Residues D247, E259, and N261 each contribute to the Mn(2+) site.

It belongs to the RimK family. MptN subfamily. As to quaternary structure, homodimer. Mg(2+) serves as cofactor. Requires Mn(2+) as cofactor.

It carries out the reaction 5,6,7,8-tetrahydromethanopterin + L-glutamate + ATP = 5,6,7,8-tetrahydrosarcinapterin + ADP + phosphate + H(+). The protein operates within cofactor biosynthesis; 5,6,7,8-tetrahydrosarcinapterin biosynthesis. Functionally, catalyzes the ATP or GTP-dependent addition of one L-glutamate molecule to tetrahydromethanopterin, producing tetrahydrosarcinapterin. This is Tetrahydromethanopterin:alpha-L-glutamate ligase (mptN) from Methanococcus maripaludis (strain DSM 14266 / JCM 13030 / NBRC 101832 / S2 / LL).